A 391-amino-acid chain; its full sequence is MSRFLICSFALVLLYPAGIDMYLVGLPRIAADLNASEAQLHIAFSVYLAGMAAAMLFAGKVADRSGRKPVAIPGAALFIIASVFCSLAETSTLFLAGRFLQGLGAGCCYVVAFAILRDTLDDRRRAKVLSLLNGITCIIPVLAPVLGHLIMLKFPWQSLFWTMAIMGIAVLMLSLFILKETRPAAPAASDKSRENSESLLNRFFLSRVVITTLSVSVILTFVNTSPVLLMEIMGFERGEYATIMALTAGVSMTVSFSTPFALGIFKPRTLMITSQVLFLAAGITLAVSPSHAISLFGITLICAGFSVGFGVAMSQALGPFSLRAGVASSTLGIAQVCGSSLWIWLAAVVGIGAWNMLIGILIACSIVSLLLIMFVAPGRPVAAHEEIHHHA.

At 1-3 (MSR) the chain is on the cytoplasmic side. Residues 4–24 (FLICSFALVLLYPAGIDMYLV) form a helical membrane-spanning segment. Residues 25 to 41 (GLPRIAADLNASEAQLH) lie on the Periplasmic side of the membrane. The chain crosses the membrane as a helical span at residues 42–62 (IAFSVYLAGMAAAMLFAGKVA). At 63–68 (DRSGRK) the chain is on the cytoplasmic side. Residues 69–89 (PVAIPGAALFIIASVFCSLAE) traverse the membrane as a helical segment. The Periplasmic portion of the chain corresponds to 90-92 (TST). The chain crosses the membrane as a helical span at residues 93-113 (LFLAGRFLQGLGAGCCYVVAF). Residues 114-130 (AILRDTLDDRRRAKVLS) lie on the Cytoplasmic side of the membrane. A helical membrane pass occupies residues 131–151 (LLNGITCIIPVLAPVLGHLIM). Residues 152-157 (LKFPWQ) lie on the Periplasmic side of the membrane. Residues 158–178 (SLFWTMAIMGIAVLMLSLFIL) form a helical membrane-spanning segment. Topologically, residues 179-198 (KETRPAAPAASDKSRENSES) are cytoplasmic. A helical membrane pass occupies residues 199–221 (LLNRFFLSRVVITTLSVSVILTF). The Periplasmic portion of the chain corresponds to 222-244 (VNTSPVLLMEIMGFERGEYATIM). The helical transmembrane segment at 245–265 (ALTAGVSMTVSFSTPFALGIF) threads the bilayer. Residues 266-268 (KPR) lie on the Cytoplasmic side of the membrane. Residues 269–289 (TLMITSQVLFLAAGITLAVSP) traverse the membrane as a helical segment. Topologically, residues 290-292 (SHA) are periplasmic. The helical transmembrane segment at 293–313 (ISLFGITLICAGFSVGFGVAM) threads the bilayer. Residues 314–330 (SQALGPFSLRAGVASST) lie on the Cytoplasmic side of the membrane. A helical transmembrane segment spans residues 331 to 351 (LGIAQVCGSSLWIWLAAVVGI). Over 352–355 (GAWN) the chain is Periplasmic. Residues 356–376 (MLIGILIACSIVSLLLIMFVA) form a helical membrane-spanning segment. Over 377-391 (PGRPVAAHEEIHHHA) the chain is Cytoplasmic.

The protein belongs to the major facilitator superfamily. DHA1 family. MdtL (TC 2.A.1.2.22) subfamily.

The protein resides in the cell inner membrane. This chain is Multidrug resistance protein MdtL, found in Shigella dysenteriae serotype 1 (strain Sd197).